Consider the following 664-residue polypeptide: NAD(P)H-quinone oxidoreductase chain 5 (664 aa).

The next 16 membrane-spanning stretches (helical) occupy residues 7–27, 39–59, 91–111, 120–140, 144–164, 187–207, 219–239, 258–278, 290–310, 327–347, 352–372, 395–415, 420–440, 495–515, 541–561, and 643–663; these read YAWLIPVLPLLGAMVIGIGLI, LNAVFVLSLIGTSMALSFGLL, HLSALMSVIVTTVALLVMIYT, GYVRFYAYLSIFSSSMLGLVF, LVQVYIFWELVGMCSYLLIGF, FGLLLGMLGLYWATGSFEFDL, GQISSLLAIVFAVLVFLGPVA, TPISALIHAATMVAAGVFLVA, AMNVIAWTGATTAFLGATIAL, LGYMVMAMGIGGYTAGLFHLM, FKAMLFLGSGSVIHGMEEVVG, ATTFLIGTLAICGIPPFAGFW, ILGLAFEANPVLWFIGWATAG, FPLMALAVPSVLIGLLGVPWG, FLIMGGNSVGIALIGITIASL, and VQFYALIVFGAVLGFVIFFSV.

Belongs to the complex I subunit 5 family.

It is found in the cell membrane. The catalysed reaction is a plastoquinone + NADH + (n+1) H(+)(in) = a plastoquinol + NAD(+) + n H(+)(out). It carries out the reaction a plastoquinone + NADPH + (n+1) H(+)(in) = a plastoquinol + NADP(+) + n H(+)(out). Its function is as follows. NDH-1 shuttles electrons from NAD(P)H, via FMN and iron-sulfur (Fe-S) centers, to quinones in the respiratory chain. The immediate electron acceptor for the enzyme in this species is believed to be plastoquinone. Couples the redox reaction to proton translocation (for every two electrons transferred, four hydrogen ions are translocated across the cytoplasmic membrane), and thus conserves the redox energy in a proton gradient. The chain is NAD(P)H-quinone oxidoreductase chain 5 (ndhF) from Picosynechococcus sp. (strain ATCC 27264 / PCC 7002 / PR-6) (Agmenellum quadruplicatum).